The following is a 365-amino-acid chain: tRNA 2-selenouridine synthase (365 aa).

One can recognise a Rhodanese domain in the interval 12–136 (FLDDVPMMDM…LRTFLLDTTQ (125 aa)). C95 serves as the catalytic S-selanylcysteine intermediate.

Belongs to the SelU family. In terms of assembly, monomer.

The enzyme catalyses 5-methylaminomethyl-2-thiouridine(34) in tRNA + selenophosphate + (2E)-geranyl diphosphate + H2O + H(+) = 5-methylaminomethyl-2-selenouridine(34) in tRNA + (2E)-thiogeraniol + phosphate + diphosphate. It carries out the reaction 5-methylaminomethyl-2-thiouridine(34) in tRNA + (2E)-geranyl diphosphate = 5-methylaminomethyl-S-(2E)-geranyl-thiouridine(34) in tRNA + diphosphate. The catalysed reaction is 5-methylaminomethyl-S-(2E)-geranyl-thiouridine(34) in tRNA + selenophosphate + H(+) = 5-methylaminomethyl-2-(Se-phospho)selenouridine(34) in tRNA + (2E)-thiogeraniol. It catalyses the reaction 5-methylaminomethyl-2-(Se-phospho)selenouridine(34) in tRNA + H2O = 5-methylaminomethyl-2-selenouridine(34) in tRNA + phosphate. Functionally, involved in the post-transcriptional modification of the uridine at the wobble position (U34) of tRNA(Lys), tRNA(Glu) and tRNA(Gln). Catalyzes the conversion of 2-thiouridine (S2U-RNA) to 2-selenouridine (Se2U-RNA). Acts in a two-step process involving geranylation of 2-thiouridine (S2U) to S-geranyl-2-thiouridine (geS2U) and subsequent selenation of the latter derivative to 2-selenouridine (Se2U) in the tRNA chain. The protein is tRNA 2-selenouridine synthase of Pseudomonas putida (strain W619).